The chain runs to 303 residues: Ribosomal protein L11 methyltransferase (303 aa).

S-adenosyl-L-methionine contacts are provided by threonine 146, glycine 167, aspartate 189, and asparagine 236.

This sequence belongs to the methyltransferase superfamily. PrmA family.

Its subcellular location is the cytoplasm. The enzyme catalyses L-lysyl-[protein] + 3 S-adenosyl-L-methionine = N(6),N(6),N(6)-trimethyl-L-lysyl-[protein] + 3 S-adenosyl-L-homocysteine + 3 H(+). Functionally, methylates ribosomal protein L11. In Acinetobacter baylyi (strain ATCC 33305 / BD413 / ADP1), this protein is Ribosomal protein L11 methyltransferase.